Here is a 158-residue protein sequence, read N- to C-terminus: Small ribosomal subunit protein uS9 (158 aa).

It belongs to the universal ribosomal protein uS9 family.

In Nitrobacter winogradskyi (strain ATCC 25391 / DSM 10237 / CIP 104748 / NCIMB 11846 / Nb-255), this protein is Small ribosomal subunit protein uS9.